The sequence spans 844 residues: Probable serine/threonine-protein kinase DDB_G0267566 (844 aa).

ANK repeat units lie at residues 335 to 367 (KGDT…NANI) and 371 to 400 (KHKV…KPFL). The Protein kinase domain maps to 508–773 (SELGKLIGKG…FEVFQKLKKV (266 aa)). ATP-binding positions include 514 to 522 (IGKGANGKV) and K539. D634 serves as the catalytic Proton acceptor.

It belongs to the protein kinase superfamily. Ser/Thr protein kinase family.

It carries out the reaction L-seryl-[protein] + ATP = O-phospho-L-seryl-[protein] + ADP + H(+). The catalysed reaction is L-threonyl-[protein] + ATP = O-phospho-L-threonyl-[protein] + ADP + H(+). The polypeptide is Probable serine/threonine-protein kinase DDB_G0267566 (Dictyostelium discoideum (Social amoeba)).